The primary structure comprises 40 residues: Cytochrome c3 hydrogenase small chain (40 aa).

It depends on Fe cation as a cofactor.

It carries out the reaction 2 Fe(III)-[cytochrome c3] + H2 = 2 Fe(II)-[cytochrome c3] + 2 H(+). This chain is Cytochrome c3 hydrogenase small chain (hoxK), found in Acidithiobacillus ferrooxidans (Thiobacillus ferrooxidans).